The sequence spans 516 residues: 2,3-bisphosphoglycerate-independent phosphoglycerate mutase (516 aa).

2 residues coordinate Mn(2+): Asp-14 and Ser-64. Ser-64 (phosphoserine intermediate) is an active-site residue. Substrate is bound by residues His-125, 155-156 (RD), Arg-187, Arg-193, 263-266 (RPDR), and Lys-337. Mn(2+) contacts are provided by Asp-404, His-408, Asp-445, His-446, and His-464.

This sequence belongs to the BPG-independent phosphoglycerate mutase family. Monomer. Mn(2+) serves as cofactor.

It carries out the reaction (2R)-2-phosphoglycerate = (2R)-3-phosphoglycerate. The protein operates within carbohydrate degradation; glycolysis; pyruvate from D-glyceraldehyde 3-phosphate: step 3/5. Functionally, catalyzes the interconversion of 2-phosphoglycerate and 3-phosphoglycerate. The polypeptide is 2,3-bisphosphoglycerate-independent phosphoglycerate mutase (Saccharophagus degradans (strain 2-40 / ATCC 43961 / DSM 17024)).